Consider the following 275-residue polypeptide: MAALDGLPPLRDVIQRHGLDARKALGQNFLLDLNLTQKVARTAGALEETTVFEVGPGPGGLTRAILALGAKKVIAVERDARCLPALAEIADHYPGRLEVIEGDALKTDFEALAPEGPVKIIANLPYNVGTQLLVNWLLPKAWPPFWQSLTLMFQKEVGERIVAGEDDDHYGRLGVLCGWRTDARMAFDVPPQAFTPPPKVTSTVVHLLPRENPVQCAVANLEKVTQAAFGQRRKMLRQSLKPLGGESLLVKAGIDPARRAETLSVEEFCLLANNL.

Residues asparagine 28, leucine 30, glycine 55, glutamate 77, aspartate 103, and asparagine 123 each contribute to the S-adenosyl-L-methionine site.

This sequence belongs to the class I-like SAM-binding methyltransferase superfamily. rRNA adenine N(6)-methyltransferase family. RsmA subfamily.

Its subcellular location is the cytoplasm. The catalysed reaction is adenosine(1518)/adenosine(1519) in 16S rRNA + 4 S-adenosyl-L-methionine = N(6)-dimethyladenosine(1518)/N(6)-dimethyladenosine(1519) in 16S rRNA + 4 S-adenosyl-L-homocysteine + 4 H(+). Functionally, specifically dimethylates two adjacent adenosines (A1518 and A1519) in the loop of a conserved hairpin near the 3'-end of 16S rRNA in the 30S particle. May play a critical role in biogenesis of 30S subunits. This chain is Ribosomal RNA small subunit methyltransferase A, found in Rhizobium etli (strain ATCC 51251 / DSM 11541 / JCM 21823 / NBRC 15573 / CFN 42).